Consider the following 273-residue polypeptide: 2,3,4,5-tetrahydropyridine-2,6-dicarboxylate N-succinyltransferase (273 aa).

Positions 104 and 141 each coordinate substrate.

Belongs to the transferase hexapeptide repeat family. As to quaternary structure, homotrimer.

The protein resides in the cytoplasm. It carries out the reaction (S)-2,3,4,5-tetrahydrodipicolinate + succinyl-CoA + H2O = (S)-2-succinylamino-6-oxoheptanedioate + CoA. Its pathway is amino-acid biosynthesis; L-lysine biosynthesis via DAP pathway; LL-2,6-diaminopimelate from (S)-tetrahydrodipicolinate (succinylase route): step 1/3. This chain is 2,3,4,5-tetrahydropyridine-2,6-dicarboxylate N-succinyltransferase, found in Azoarcus sp. (strain BH72).